A 1898-amino-acid polypeptide reads, in one-letter code: Protein NYNRIN (1898 aa).

Disordered regions lie at residues 289-315 (SNNQDGMDSAQEEGTVQATSSQDSTNH), 424-450 (LPSAESPAGRPDGGLGGEAALQNCPRP), 467-533 (DVKD…TDQS), 618-691 (EPTT…TDAG), and 711-731 (VSLLKGQGQAGRQGPQSSGTL). Residues 618 to 627 (EPTTPKTPQA) show a composition bias toward polar residues. The segment covering 649-672 (PAATVSKAPAASKAPAAPKVPVTP) has biased composition (low complexity). In terms of domain architecture, RNase NYN spans 792–942 (LRRVVIDGSS…LGRDGPTLDE (151 aa)). The segment at 968–1019 (SASVTELSDDADSGPLESLPNMEEVREEKEERQDEEQRQGQGTQKAAEEDDL) is disordered. Positions 990–1005 (EEVREEKEERQDEEQR) are enriched in basic and acidic residues. Residues 1304–1450 (LSTFVCIHMS…VDTLAKQGAQ (147 aa)) form the RNase H type-1 domain. 2 consecutive transmembrane segments (helical) span residues 1372 to 1392 (VVFLTHCNWIFSLLWELLPLW) and 1408 to 1428 (PSLLSYIISLTSGLSSLPFIY). In terms of domain architecture, Integrase catalytic spans 1609-1774 (RSTAPWSNLQ…ESRLTEPLWW (166 aa)).

The protein resides in the membrane. The polypeptide is Protein NYNRIN (NYNRIN) (Homo sapiens (Human)).